The sequence spans 234 residues: Large ribosomal subunit protein uL1 (234 aa).

The protein belongs to the universal ribosomal protein uL1 family. As to quaternary structure, part of the 50S ribosomal subunit.

In terms of biological role, binds directly to 23S rRNA. The L1 stalk is quite mobile in the ribosome, and is involved in E site tRNA release. Its function is as follows. Protein L1 is also a translational repressor protein, it controls the translation of the L11 operon by binding to its mRNA. This is Large ribosomal subunit protein uL1 from Desulfatibacillum aliphaticivorans.